The chain runs to 312 residues: Adenylyl-sulfate kinase, chloroplastic (312 aa).

Glycine 142–serine 149 serves as a coordination point for ATP. The active-site Phosphoserine intermediate is the serine 216.

It belongs to the APS kinase family.

It localises to the plastid. The protein localises to the chloroplast. It carries out the reaction adenosine 5'-phosphosulfate + ATP = 3'-phosphoadenylyl sulfate + ADP + H(+). It functions in the pathway sulfur metabolism; hydrogen sulfide biosynthesis; sulfite from sulfate: step 2/3. Its function is as follows. Catalyzes the synthesis of activated sulfate. The sequence is that of Adenylyl-sulfate kinase, chloroplastic (AKN) from Catharanthus roseus (Madagascar periwinkle).